We begin with the raw amino-acid sequence, 444 residues long: Putative zinc metalloprotease PD_0327 (444 aa).

A Zn(2+)-binding site is contributed by H22. E23 is a catalytic residue. H26 lines the Zn(2+) pocket. A helical membrane pass occupies residues 98 to 120; the sequence is IAIVAAGPLANLLLCMLLLWVLF. A PDZ domain is found at 192-278; that stretch reads TLELSKLKQP…HPGMIEIRRG (87 aa). A run of 2 helical transmembrane segments spans residues 371–393 and 418–440; these read VGWF…LFPI and AMAA…AFYN.

The protein belongs to the peptidase M50B family. The cofactor is Zn(2+).

The protein localises to the cell inner membrane. In Xylella fastidiosa (strain Temecula1 / ATCC 700964), this protein is Putative zinc metalloprotease PD_0327.